The chain runs to 344 residues: Sorting nexin-16 (344 aa).

Residues 1 to 10 are compositionally biased toward pro residues; sequence MATPYVPVPM. Disordered stretches follow at residues 1-66 and 81-107; these read MATP…NTSS and ASSI…EDRP. Positions 14–26 are enriched in polar residues; the sequence is NSASSFTTNRNQR. The segment covering 27 to 40 has biased composition (low complexity); the sequence is SSSFGSVSTSSNSS. Residues 41–66 are compositionally biased toward polar residues; sequence KGQLEDSNMGNFKQTSVPDQMDNTSS. The PX domain occupies 105–218; it reads DRPSTPTILG…EFLCLDDPPG (114 aa). A 1,2-diacyl-sn-glycero-3-phospho-(1D-myo-inositol-3-phosphate) contacts are provided by arginine 144, threonine 146, and arginine 184. Serine 222 is subject to Phosphoserine. Positions 223–278 form a coiled coil; the sequence is LEESRAFCETLEETNYRLQKELLEKQKEMESLKKLLSEKQLHIDTLENRIRTLSLE.

The protein belongs to the sorting nexin family. In terms of assembly, homooligomer. Interacts with EGFR. As to expression, detected in placenta, lung, liver,heart and pancreas.

It localises to the early endosome membrane. The protein resides in the late endosome membrane. The protein localises to the cytoplasm. It is found in the lysosome. Its function is as follows. May be involved in several stages of intracellular trafficking. Plays a role in protein transport from early to late endosomes. Plays a role in protein transport to the lysosome. Promotes degradation of EGFR after EGF signaling. Plays a role in intracellular transport of vesicular stomatitis virus nucleocapsids from the endosome to the cytoplasm. The sequence is that of Sorting nexin-16 (SNX16) from Homo sapiens (Human).